We begin with the raw amino-acid sequence, 458 residues long: Smoothelin-like protein 2 (458 aa).

Positions 24–88 (LEGAVRALHE…RQVESLGLTT (65 aa)) form a coiled coil. Disordered stretches follow at residues 87 to 111 (TTGL…RAPR), 123 to 142 (FSLS…SELE), and 151 to 312 (IIEN…GAQA). A compositionally biased stretch (pro residues) spans 94–104 (PGTPSPPPAPG). Thr96 carries the phosphothreonine modification. Phosphoserine is present on residues Ser98, Ser126, and Ser131. Residues 131–142 (SLDHHDEASELE) are compositionally biased toward basic and acidic residues. Low complexity-rich tracts occupy residues 158–167 (PGADPGDGPP) and 209–220 (TSATALSPTSAA). Polar residues predominate over residues 225 to 244 (LSSSPSEATTPWTPSPSEKN). Positions 245-254 (SSLPRSLSSS) are enriched in low complexity. Phosphoserine occurs at positions 252, 254, and 267. Positions 270–283 (LVTPPQSPPSPQPP) are enriched in pro residues. Thr272 carries the post-translational modification Phosphothreonine. Residue Ser276 is modified to Phosphoserine. The segment covering 290–299 (RPGERRRELV) has biased composition (basic and acidic residues). Polar residues predominate over residues 300–310 (RSQTLPRTSGA). Ser341 is modified (phosphoserine). Residues 348–455 (SSIKQILLEW…YVQSLYNHLR (108 aa)) enclose the Calponin-homology (CH) domain.

Belongs to the smoothelin family.

This chain is Smoothelin-like protein 2 (SMTNL2), found in Bos taurus (Bovine).